A 456-amino-acid polypeptide reads, in one-letter code: SWI/SNF complex component SNF12 homolog (456 aa).

The SWIB/MDM2 domain occupies 234–310; it reads HVPQKYKVLG…PQLLREHLSP (77 aa). The tract at residues 435 to 456 is disordered; it reads KQTTPNPTPQQISMAPSTPQTP.

This sequence belongs to the SMARCD family. In terms of assembly, part of a SWI-SNF complex.

Its subcellular location is the nucleus. Functionally, involved in transcriptional activation and repression of select genes by chromatin remodeling (alteration of DNA-nucleosome topology). The chain is SWI/SNF complex component SNF12 homolog (snf12-1) from Dictyostelium discoideum (Social amoeba).